The primary structure comprises 362 residues: Phosphoserine aminotransferase (362 aa).

Residues Ser9 and Arg42 each contribute to the L-glutamate site. Pyridoxal 5'-phosphate contacts are provided by residues 76–77 (GR), Trp102, Thr153, Asp174, and Gln197. An N6-(pyridoxal phosphate)lysine modification is found at Lys198. Position 239–240 (239–240 (NT)) interacts with pyridoxal 5'-phosphate.

The protein belongs to the class-V pyridoxal-phosphate-dependent aminotransferase family. SerC subfamily. Homodimer. Requires pyridoxal 5'-phosphate as cofactor.

It localises to the cytoplasm. It catalyses the reaction O-phospho-L-serine + 2-oxoglutarate = 3-phosphooxypyruvate + L-glutamate. It carries out the reaction 4-(phosphooxy)-L-threonine + 2-oxoglutarate = (R)-3-hydroxy-2-oxo-4-phosphooxybutanoate + L-glutamate. The protein operates within amino-acid biosynthesis; L-serine biosynthesis; L-serine from 3-phospho-D-glycerate: step 2/3. Its pathway is cofactor biosynthesis; pyridoxine 5'-phosphate biosynthesis; pyridoxine 5'-phosphate from D-erythrose 4-phosphate: step 3/5. In terms of biological role, catalyzes the reversible conversion of 3-phosphohydroxypyruvate to phosphoserine and of 3-hydroxy-2-oxo-4-phosphonooxybutanoate to phosphohydroxythreonine. The sequence is that of Phosphoserine aminotransferase from Escherichia fergusonii (strain ATCC 35469 / DSM 13698 / CCUG 18766 / IAM 14443 / JCM 21226 / LMG 7866 / NBRC 102419 / NCTC 12128 / CDC 0568-73).